Here is a 134-residue protein sequence, read N- to C-terminus: Bradykinin-related peptides (134 aa).

The first 22 residues, 1–22 (MAFLKKSLFLVLFLGVVSLSFC), serve as a signal peptide directing secretion. 3 propeptides span residues 23–44 (EEEK…ESLG), 71–82 (RSISGLTPIRLS), and 99–121 (ISEA…PLRG). A compositionally biased stretch (basic and acidic residues) spans 24 to 33 (EEKREEHEEE). Residues 24–71 (EEKREEHEEEKRDEEDAESLGKRYGGLSPLRISKRVPPGFTPFRSPAR) are disordered. P126 bears the 4-hydroxyproline; partial; in form [Hyp3]-bradykinin and [Hyp3]-bradykinin-Val,Asp mark.

It belongs to the frog skin active peptide (FSAP) family. Bradykinin-related peptide subfamily. Expressed by the skin glands. Expression levels in inguinal glands are much higher than in granular glands.

The protein resides in the secreted. Functionally, may produce in vitro relaxation of rat arterial smooth muscle and constriction of intestinal smooth muscle. May target bradykinin receptors (BDKRB). This Physalaemus nattereri (Cuyaba dwarf frog) protein is Bradykinin-related peptides.